The primary structure comprises 189 residues: GMP synthase [glutamine-hydrolyzing] subunit A (189 aa).

The region spanning 1-189 (MIVILNNGGQ…CKKCGFGFEE (189 aa)) is the Glutamine amidotransferase type-1 domain. Residue cysteine 76 is the Nucleophile of the active site. Residues histidine 163 and glutamate 165 contribute to the active site.

Heterodimer composed of a glutamine amidotransferase subunit (A) and a GMP-binding subunit (B).

The catalysed reaction is XMP + L-glutamine + ATP + H2O = GMP + L-glutamate + AMP + diphosphate + 2 H(+). It functions in the pathway purine metabolism; GMP biosynthesis; GMP from XMP (L-Gln route): step 1/1. Its function is as follows. Catalyzes the synthesis of GMP from XMP. This Methanococcus maripaludis (strain DSM 14266 / JCM 13030 / NBRC 101832 / S2 / LL) protein is GMP synthase [glutamine-hydrolyzing] subunit A.